The following is a 477-amino-acid chain: 3-isopropylmalate dehydratase large subunit (477 aa).

[4Fe-4S] cluster-binding residues include cysteine 352, cysteine 413, and cysteine 416.

The protein belongs to the aconitase/IPM isomerase family. LeuC type 1 subfamily. As to quaternary structure, heterodimer of LeuC and LeuD. It depends on [4Fe-4S] cluster as a cofactor.

It catalyses the reaction (2R,3S)-3-isopropylmalate = (2S)-2-isopropylmalate. It participates in amino-acid biosynthesis; L-leucine biosynthesis; L-leucine from 3-methyl-2-oxobutanoate: step 2/4. Functionally, catalyzes the isomerization between 2-isopropylmalate and 3-isopropylmalate, via the formation of 2-isopropylmaleate. This is 3-isopropylmalate dehydratase large subunit from Pseudomonas putida (strain W619).